The sequence spans 124 residues: Small ribosomal subunit protein uS12 (124 aa).

The tract at residues 1 to 29 is disordered; it reads MATINQLVRKGRKRRVAKSNVPALEASPQ. Asp89 is modified (3-methylthioaspartic acid). The disordered stretch occupies residues 101–124; it reads AADTAGVDKRRQGRSKYGAKRPKS. Over residues 111 to 124 the composition is skewed to basic residues; it reads RQGRSKYGAKRPKS.

The protein belongs to the universal ribosomal protein uS12 family. As to quaternary structure, part of the 30S ribosomal subunit. Contacts proteins S8 and S17. May interact with IF1 in the 30S initiation complex.

Its function is as follows. With S4 and S5 plays an important role in translational accuracy. Functionally, interacts with and stabilizes bases of the 16S rRNA that are involved in tRNA selection in the A site and with the mRNA backbone. Located at the interface of the 30S and 50S subunits, it traverses the body of the 30S subunit contacting proteins on the other side and probably holding the rRNA structure together. The combined cluster of proteins S8, S12 and S17 appears to hold together the shoulder and platform of the 30S subunit. The polypeptide is Small ribosomal subunit protein uS12 (Alkalilimnicola ehrlichii (strain ATCC BAA-1101 / DSM 17681 / MLHE-1)).